The chain runs to 197 residues: Ycf20-like protein (197 aa).

Helical transmembrane passes span 113-133 (MKIF…TILG), 138-158 (WDVL…MLMY), and 173-193 (FVVF…VDAF).

This sequence belongs to the ycf20 family.

Its subcellular location is the membrane. The sequence is that of Ycf20-like protein from Arabidopsis thaliana (Mouse-ear cress).